The following is a 413-amino-acid chain: Cell surface GPI-anchored protein ECM33 (413 aa).

The first 20 residues, 1–20 (MQIKSFLLPIVAALLTSVSA), serve as a signal peptide directing secretion. 11 N-linked (GlcNAc...) asparagine glycosylation sites follow: N93, N102, N172, N209, N222, N227, N279, N290, N306, N322, and N382. Residues 347–390 (YVCTHPANPSSSSKSGSSTQTGKSDSKSSDGSSSSNSSSSSKKG) form a disordered region. A compositionally biased stretch (low complexity) spans 356–390 (SSSSKSGSSTQTGKSDSKSSDGSSSSNSSSSSKKG). G390 carries the GPI-anchor amidated glycine lipid modification. The propeptide at 391–413 (ASNVLVVPGMVLTTALGVLLALI) is removed in mature form.

The protein belongs to the SPS2 family.

The protein localises to the cell membrane. The protein resides in the secreted. Its subcellular location is the cell wall. Its function is as follows. Cell surface protein required for proper cell wall integrity and for the correct assembly of the mannoprotein outer layer of the cell wall. This Candida albicans (strain SC5314 / ATCC MYA-2876) (Yeast) protein is Cell surface GPI-anchored protein ECM33 (ECM331).